We begin with the raw amino-acid sequence, 290 residues long: Diaminopimelate epimerase (290 aa).

Residues Asn14 and Asn67 each coordinate substrate. Cys76 acts as the Proton donor in catalysis. Residues 77 to 78, Asn166, Asn199, and 217 to 218 each bind substrate; these read GN and ER. Cys226 acts as the Proton acceptor in catalysis. 227–228 is a binding site for substrate; it reads GT.

This sequence belongs to the diaminopimelate epimerase family. In terms of assembly, homodimer.

It localises to the cytoplasm. The enzyme catalyses (2S,6S)-2,6-diaminopimelate = meso-2,6-diaminopimelate. It participates in amino-acid biosynthesis; L-lysine biosynthesis via DAP pathway; DL-2,6-diaminopimelate from LL-2,6-diaminopimelate: step 1/1. Its function is as follows. Catalyzes the stereoinversion of LL-2,6-diaminopimelate (L,L-DAP) to meso-diaminopimelate (meso-DAP), a precursor of L-lysine and an essential component of the bacterial peptidoglycan. The protein is Diaminopimelate epimerase of Geobacillus thermodenitrificans (strain NG80-2).